The chain runs to 585 residues: Amyloid protein-binding protein 2 (585 aa).

8 TPR repeats span residues 50–83 (QGRL…HHCF), 120–153 (IQVG…CTLH), 206–239 (AALY…ITSG), 288–321 (SDTL…RQSV), 333–367 (HEDL…ITHI), 429–462 (AKHY…KEQL), 471–505 (ALSV…GKKL), and 514–547 (EYDY…NRLR).

Component of a CRL2 E3 ubiquitin-protein ligase complex, also named ECS (Elongin BC-CUL2/5-SOCS-box protein) complex, composed of CUL2, Elongin BC (ELOB and ELOC), RBX1 and substrate-specific adapter APPBP2. Interacts with APP; APP interaction inhibits the E3 ubiquitin-protein ligase activity of the CRL2(APPBP2) complex. Rapidly degraded by the proteasome upon overexpression of a C-terminal fragment of APP.

The protein localises to the nucleus. Its subcellular location is the cytoplasm. It localises to the cytoskeleton. It is found in the membrane. Its pathway is protein modification; protein ubiquitination. E3 ubiquitin-protein ligase activity of the CRL2(APPBP2) complex is inhibited by APP. In terms of biological role, substrate-recognition component of a Cul2-RING (CRL2) E3 ubiquitin-protein ligase complex of the DesCEND (destruction via C-end degrons) pathway, which recognizes a C-degron located at the extreme C terminus of target proteins, leading to their ubiquitination and degradation. The C-degron recognized by the DesCEND pathway is usually a motif of less than ten residues and can be present in full-length proteins, truncated proteins or proteolytically cleaved forms. The CRL2(APPBP2) complex specifically recognizes proteins with a -Arg-Xaa-Xaa-Gly degron at the C-terminus, leading to their ubiquitination and degradation. The CRL2(APPBP2) complex mediates ubiquitination and degradation of truncated SELENOV selenoproteins produced by failed UGA/Sec decoding, which end with a -Arg-Xaa-Xaa-Gly degron. May play a role in intracellular protein transport: may be involved in the translocation of APP along microtubules toward the cell surface. This chain is Amyloid protein-binding protein 2, found in Rattus norvegicus (Rat).